Here is a 101-residue protein sequence, read N- to C-terminus: Replication restart protein PriB (101 aa).

Residues 1 to 101 (MTTNNLVLAG…LHAENVELKT (101 aa)) enclose the SSB domain.

This sequence belongs to the PriB family. Homodimer. Interacts with PriA and DnaT. Component of the replication restart primosome. Primosome assembly occurs via a 'hand-off' mechanism. PriA binds to replication forks, subsequently PriB then DnaT bind; DnaT then displaces ssDNA to generate the helicase loading substrate.

Its function is as follows. Involved in the restart of stalled replication forks, which reloads the replicative helicase on sites other than the origin of replication; the PriA-PriB pathway is the major replication restart pathway. During primosome assembly it facilitates complex formation between PriA and DnaT on DNA; stabilizes PriA on DNA. Stimulates the DNA unwinding activity of PriA helicase. This Shewanella pealeana (strain ATCC 700345 / ANG-SQ1) protein is Replication restart protein PriB.